The primary structure comprises 301 residues: Phosphatidylglycerol--prolipoprotein diacylglyceryl transferase (301 aa).

The next 4 helical transmembrane spans lie at 10 to 30 (IAFSLGPVKVHWYGLMYLASF), 57 to 77 (LLFYAMMGVVLGGRVGYMLFY), 92 to 112 (VWEGGMSFHGGLIGVLLAVAW), and 119 to 139 (LQMFDVLDFGAPLVPVGLGFG). R140 provides a ligand contact to a 1,2-diacyl-sn-glycero-3-phospho-(1'-sn-glycerol). Helical transmembrane passes span 202-222 (PSQLYEAFLEGLVMFIVLWLF), 230-250 (YAVSGLFALLYGVFRFLVEFV), and 264-284 (LTRGQILSLPLIVIGLFLFWL).

This sequence belongs to the Lgt family.

Its subcellular location is the cell inner membrane. It catalyses the reaction L-cysteinyl-[prolipoprotein] + a 1,2-diacyl-sn-glycero-3-phospho-(1'-sn-glycerol) = an S-1,2-diacyl-sn-glyceryl-L-cysteinyl-[prolipoprotein] + sn-glycerol 1-phosphate + H(+). It participates in protein modification; lipoprotein biosynthesis (diacylglyceryl transfer). In terms of biological role, catalyzes the transfer of the diacylglyceryl group from phosphatidylglycerol to the sulfhydryl group of the N-terminal cysteine of a prolipoprotein, the first step in the formation of mature lipoproteins. The sequence is that of Phosphatidylglycerol--prolipoprotein diacylglyceryl transferase from Xylella fastidiosa (strain 9a5c).